A 962-amino-acid polypeptide reads, in one-letter code: Glycine dehydrogenase (decarboxylating) (962 aa).

At Lys709 the chain carries N6-(pyridoxal phosphate)lysine.

This sequence belongs to the GcvP family. In terms of assembly, the glycine cleavage system is composed of four proteins: P, T, L and H. The cofactor is pyridoxal 5'-phosphate.

The catalysed reaction is N(6)-[(R)-lipoyl]-L-lysyl-[glycine-cleavage complex H protein] + glycine + H(+) = N(6)-[(R)-S(8)-aminomethyldihydrolipoyl]-L-lysyl-[glycine-cleavage complex H protein] + CO2. Functionally, the glycine cleavage system catalyzes the degradation of glycine. The P protein binds the alpha-amino group of glycine through its pyridoxal phosphate cofactor; CO(2) is released and the remaining methylamine moiety is then transferred to the lipoamide cofactor of the H protein. This Shewanella baltica (strain OS223) protein is Glycine dehydrogenase (decarboxylating).